The chain runs to 452 residues: UPF0210 protein Cthe_0410 (452 aa).

This sequence belongs to the UPF0210 family. In terms of assembly, homodimer.

The polypeptide is UPF0210 protein Cthe_0410 (Acetivibrio thermocellus (strain ATCC 27405 / DSM 1237 / JCM 9322 / NBRC 103400 / NCIMB 10682 / NRRL B-4536 / VPI 7372) (Clostridium thermocellum)).